A 413-amino-acid chain; its full sequence is Multifunctional CCA protein (413 aa).

ATP is bound by residues Gly8 and Arg11. 2 residues coordinate CTP: Gly8 and Arg11. Asp21 and Asp23 together coordinate Mg(2+). Residues Arg91, Arg137, and Arg140 each contribute to the ATP site. 3 residues coordinate CTP: Arg91, Arg137, and Arg140. Residues 228–329 (TGIHTLMVLE…VKLFDKADLW (102 aa)) form the HD domain.

Belongs to the tRNA nucleotidyltransferase/poly(A) polymerase family. Bacterial CCA-adding enzyme type 1 subfamily. As to quaternary structure, monomer. Can also form homodimers and oligomers. The cofactor is Mg(2+). Requires Ni(2+) as cofactor.

The catalysed reaction is a tRNA precursor + 2 CTP + ATP = a tRNA with a 3' CCA end + 3 diphosphate. It carries out the reaction a tRNA with a 3' CCA end + 2 CTP + ATP = a tRNA with a 3' CCACCA end + 3 diphosphate. Functionally, catalyzes the addition and repair of the essential 3'-terminal CCA sequence in tRNAs without using a nucleic acid template. Adds these three nucleotides in the order of C, C, and A to the tRNA nucleotide-73, using CTP and ATP as substrates and producing inorganic pyrophosphate. tRNA 3'-terminal CCA addition is required both for tRNA processing and repair. Also involved in tRNA surveillance by mediating tandem CCA addition to generate a CCACCA at the 3' terminus of unstable tRNAs. While stable tRNAs receive only 3'-terminal CCA, unstable tRNAs are marked with CCACCA and rapidly degraded. This Shewanella loihica (strain ATCC BAA-1088 / PV-4) protein is Multifunctional CCA protein.